The following is a 293-amino-acid chain: ATP synthase gamma chain (293 aa).

It belongs to the ATPase gamma chain family. In terms of assembly, F-type ATPases have 2 components, CF(1) - the catalytic core - and CF(0) - the membrane proton channel. CF(1) has five subunits: alpha(3), beta(3), gamma(1), delta(1), epsilon(1). CF(0) has three main subunits: a, b and c.

It is found in the cell inner membrane. Functionally, produces ATP from ADP in the presence of a proton gradient across the membrane. The gamma chain is believed to be important in regulating ATPase activity and the flow of protons through the CF(0) complex. The sequence is that of ATP synthase gamma chain from Leptothrix cholodnii (strain ATCC 51168 / LMG 8142 / SP-6) (Leptothrix discophora (strain SP-6)).